Here is a 541-residue protein sequence, read N- to C-terminus: Membrane protein insertase YidC (541 aa).

6 helical membrane-spanning segments follow: residues 6-26 (NILL…WQAD), 325-345 (LVVD…LLMF), 349-369 (FVGN…GLLF), 420-440 (GGCL…WVLL), 457-477 (LSVQ…MFVM), and 500-520 (VIFT…WLVG).

Belongs to the OXA1/ALB3/YidC family. Type 1 subfamily. In terms of assembly, interacts with the Sec translocase complex via SecD. Specifically interacts with transmembrane segments of nascent integral membrane proteins during membrane integration.

The protein resides in the cell inner membrane. Required for the insertion and/or proper folding and/or complex formation of integral membrane proteins into the membrane. Involved in integration of membrane proteins that insert both dependently and independently of the Sec translocase complex, as well as at least some lipoproteins. Aids folding of multispanning membrane proteins. The protein is Membrane protein insertase YidC of Shewanella baltica (strain OS195).